A 411-amino-acid polypeptide reads, in one-letter code: 2,3-bisphosphoglycerate-independent phosphoglycerate mutase (411 aa).

The segment at 164-190 (VSSNDPKKEGVQPLTIRPGSDDPADAK) is disordered.

It belongs to the BPG-independent phosphoglycerate mutase family. A-PGAM subfamily.

The enzyme catalyses (2R)-2-phosphoglycerate = (2R)-3-phosphoglycerate. It functions in the pathway carbohydrate degradation; glycolysis; pyruvate from D-glyceraldehyde 3-phosphate: step 3/5. Catalyzes the interconversion of 2-phosphoglycerate and 3-phosphoglycerate. This chain is 2,3-bisphosphoglycerate-independent phosphoglycerate mutase, found in Methanoculleus marisnigri (strain ATCC 35101 / DSM 1498 / JR1).